The primary structure comprises 79 residues: Omega-phylotoxin-To1a (79 aa).

Positions 1–21 (MKKTFCFILILVCIVLKSVNA) are cleaved as a signal peptide. Residues 22 to 38 (EEEDNFEESSLEMETAR) constitute a propeptide that is removed on maturation. 4 disulfide bridges follow: Cys-39/Cys-59, Cys-46/Cys-63, Cys-58/Cys-78, and Cys-65/Cys-76.

In terms of tissue distribution, expressed by the venom duct.

It is found in the secreted. Insect-specific toxin that probably acts as an inhibitor of presynaptic insect calcium channels, presumably Cav2 subtype. In vivo, induces immediate paralysis on insects, followed by death when high doses are injected. This Tibellus oblongus (Oblong running crab spider) protein is Omega-phylotoxin-To1a.